The primary structure comprises 156 residues: Ribosomal RNA large subunit methyltransferase H (156 aa).

Residues leucine 73, glycine 104, and 123–128 (LSPLTL) each bind S-adenosyl-L-methionine.

It belongs to the RNA methyltransferase RlmH family. As to quaternary structure, homodimer.

The protein resides in the cytoplasm. The enzyme catalyses pseudouridine(1915) in 23S rRNA + S-adenosyl-L-methionine = N(3)-methylpseudouridine(1915) in 23S rRNA + S-adenosyl-L-homocysteine + H(+). Specifically methylates the pseudouridine at position 1915 (m3Psi1915) in 23S rRNA. The chain is Ribosomal RNA large subunit methyltransferase H from Marinobacter nauticus (strain ATCC 700491 / DSM 11845 / VT8) (Marinobacter aquaeolei).